Here is a 386-residue protein sequence, read N- to C-terminus: Cytotoxic granule associated RNA binding protein TIA1 (386 aa).

N-acetylmethionine is present on Met1. 3 RRM domains span residues 7–83 (KTLY…WATT), 106–184 (FHVF…WATR), and 214–286 (CTVY…WGKE). The interval 355-376 (GPNYSVPPPQGQNGSMLPSQPA) is disordered.

In terms of assembly, homooligomer; homooligomerization is induced by Zn(2+). Interacts with FASTK; the interactions leads to its phosphorylation. Interacts (via RRM1 and the C-terminal glutamine-rich (Q) sequence) with SNRPC/U1-C (via N-terminus); thereby facilitating spliceosomal U1 snRNP recruitment to 5' splice sites. Post-translationally, phosphorylatedby FASTK; phosphorylation occurs after FAS ligation in FAS-mediated apoptosis and before DNA fragmentation.

Its subcellular location is the nucleus. The protein resides in the cytoplasm. The protein localises to the stress granule. In terms of biological role, RNA-binding protein involved in the regulation of alternative pre-RNA splicing and mRNA translation by binding to uridine-rich (U-rich) RNA sequences. Binds to U-rich sequences immediately downstream from a 5' splice sites in a uridine-rich small nuclear ribonucleoprotein (U snRNP)-dependent fashion, thereby modulating alternative pre-RNA splicing. Preferably binds to the U-rich IAS1 sequence in a U1 snRNP-dependent manner; this binding is optimal if a 5' splice site is adjacent to IAS1. Activates the use of heterologous 5' splice sites; the activation depends on the intron sequence downstream from the 5' splice site, with a preference for a downstream U-rich sequence. By interacting with SNRPC/U1-C, promotes recruitment and binding of spliceosomal U1 snRNP to 5' splice sites followed by U-rich sequences, thereby facilitating atypical 5' splice site recognition by U1 snRNP. Activates splicing of alternative exons with weak 5' splice sites followed by a U-rich stretch on its own pre-mRNA and on TIAR mRNA. Acts as a modulator of alternative splicing for the apoptotic FAS receptor, thereby promoting apoptosis. Binds to the 5' splice site region of FAS intron 5 to promote accumulation of transcripts that include exon 6 at the expense of transcripts in which exon 6 is skipped, thereby leading to the transcription of a membrane-bound apoptotic FAS receptor, which promotes apoptosis. Binds to a conserved AU-rich cis element in COL2A1 intron 2 and modulates alternative splicing of COL2A1 exon 2. Also binds to the equivalent AT-rich element in COL2A1 genomic DNA, and may thereby be involved in the regulation of transcription. Involved in the repression of mRNA translation by binding to AU-rich elements (AREs) located in mRNA 3' untranslated regions (3' UTRs), including target ARE-bearing mRNAs encoding TNF and PTGS2. Also participates in the cellular response to environmental stress, by acting downstream of the stress-induced phosphorylation of EIF2S1/EIF2A to promote the recruitment of untranslated mRNAs to cytoplasmic stress granules (SGs), leading to stress-induced translational arrest. Formation and recruitment to SGs is regulated by Zn(2+). Possesses nucleolytic activity against cytotoxic lymphocyte target cells. In Mus musculus (Mouse), this protein is Cytotoxic granule associated RNA binding protein TIA1 (Tia1).